A 386-amino-acid polypeptide reads, in one-letter code: 1-deoxy-D-xylulose 5-phosphate reductoisomerase (386 aa).

The NADPH site is built by threonine 7, glycine 8, serine 9, isoleucine 10, alanine 33, and asparagine 124. Lysine 125 contributes to the 1-deoxy-D-xylulose 5-phosphate binding site. Glutamate 126 serves as a coordination point for NADPH. Position 148 (aspartate 148) interacts with Mn(2+). 1-deoxy-D-xylulose 5-phosphate contacts are provided by serine 149, glutamate 150, serine 174, and histidine 197. Residue glutamate 150 coordinates Mn(2+). Glycine 203 is a binding site for NADPH. The 1-deoxy-D-xylulose 5-phosphate site is built by serine 210, asparagine 215, lysine 216, and glutamate 219. Residue glutamate 219 coordinates Mn(2+).

It belongs to the DXR family. It depends on Mg(2+) as a cofactor. Requires Mn(2+) as cofactor.

It catalyses the reaction 2-C-methyl-D-erythritol 4-phosphate + NADP(+) = 1-deoxy-D-xylulose 5-phosphate + NADPH + H(+). It participates in isoprenoid biosynthesis; isopentenyl diphosphate biosynthesis via DXP pathway; isopentenyl diphosphate from 1-deoxy-D-xylulose 5-phosphate: step 1/6. In terms of biological role, catalyzes the NADPH-dependent rearrangement and reduction of 1-deoxy-D-xylulose-5-phosphate (DXP) to 2-C-methyl-D-erythritol 4-phosphate (MEP). This is 1-deoxy-D-xylulose 5-phosphate reductoisomerase from Kitasatospora griseola (Streptomyces griseolosporeus).